Here is a 489-residue protein sequence, read N- to C-terminus: Equilibrative nucleobase transporter 1 (489 aa).

Residues 17–37 (LLECLGFAGVLFGWTSLVFVF) traverse the membrane as a helical segment. N-linked (GlcNAc...) asparagine glycosylation occurs at Asn-56. Helical transmembrane passes span 72–92 (LIFT…GYIF), 102–122 (LIAI…SADS), 123–143 (AVLL…FLIT), and 158–180 (IITM…KLLY). Ser-253 carries the phosphoserine modification. Thr-258 is subject to Phosphothreonine. 6 helical membrane passes run 277 to 297 (FAWH…FIGT), 318 to 338 (NAFA…GLLM), 358 to 380 (AAAL…GFAV), 402 to 422 (SFLY…EHFG), 426 to 446 (GLVM…FTLI), and 455 to 475 (LYVN…PFLV).

Belongs to the SLC43A transporter (TC 2.A.1.44) family.

The protein localises to the basolateral cell membrane. The enzyme catalyses adenine(out) = adenine(in). It catalyses the reaction guanine(out) = guanine(in). It carries out the reaction hypoxanthine(out) = hypoxanthine(in). In terms of biological role, sodium-independent purine-selective nucleobase transporter which mediates the equilibrative transport of extracellular purine nucleobases such as adenine, guanine and hypoxanthine. May regulate fatty acid (FA) transport in adipocytes, acting as a positive regulator of FA efflux and as a negative regulator of FA uptake. In Bos taurus (Bovine), this protein is Equilibrative nucleobase transporter 1 (SLC43A3).